The sequence spans 405 residues: Cystathionine gamma-lyase (405 aa).

Substrate contacts are provided by Arg62, Tyr114, and Arg119. The residue at position 212 (Lys212) is an N6-(pyridoxal phosphate)lysine. Glu339 contacts substrate.

This sequence belongs to the trans-sulfuration enzymes family. In terms of assembly, homotetramer. Interacts with CALM in a calcium-dependent manner. Requires pyridoxal 5'-phosphate as cofactor.

Its subcellular location is the cytoplasm. The enzyme catalyses L,L-cystathionine + H2O = 2-oxobutanoate + L-cysteine + NH4(+). It carries out the reaction L-cysteine + H2O = hydrogen sulfide + pyruvate + NH4(+) + H(+). It catalyses the reaction L-homocysteine + H2O = 2-oxobutanoate + hydrogen sulfide + NH4(+) + H(+). The catalysed reaction is L-homoserine = 2-oxobutanoate + NH4(+). The enzyme catalyses L-selenocystathionine + H2O = L-selenocysteine + 2-oxobutanoate + NH4(+). Its pathway is amino-acid biosynthesis; L-cysteine biosynthesis; L-cysteine from L-homocysteine and L-serine: step 2/2. Its function is as follows. Catalyzes the last step in the trans-sulfuration pathway from L-methionine to L-cysteine in a pyridoxal-5'-phosphate (PLP)-dependent manner, which consists on cleaving the L,L-cystathionine molecule into L-cysteine, ammonia and 2-oxobutanoate. Part of the L-cysteine derived from the trans-sulfuration pathway is utilized for biosynthesis of the ubiquitous antioxidant glutathione. Besides its role in the conversion of L-cystathionine into L-cysteine, it utilizes L-cysteine and L-homocysteine as substrates (at much lower rates than L,L-cystathionine) to produce hydrogen sulfide (H2S). In vitro, it converts two L-cysteine molecules into lanthionine and H2S, and two L-homocysteine molecules to homolanthionine and H2S, which can be particularly relevant under conditions of severe hyperhomocysteinemia. Lanthionine and homolanthionine are structural homologs of L,L-cystathionine that differ by the absence or presence of an extra methylene group, respectively. Acts as a cysteine-protein sulfhydrase by mediating sulfhydration of target proteins: sulfhydration consists of converting -SH groups into -SSH on specific cysteine residues of target proteins such as GAPDH, PTPN1 and NF-kappa-B subunit RELA, thereby regulating their function. By generating the gasotransmitter H2S, it participates in a number of physiological processes such as vasodilation, bone protection, and inflammation. Plays an essential role in myogenesis by contributing to the biogenesis of H2S in skeletal muscle tissue. Can also accept homoserine as substrate. Catalyzes the elimination of selenocystathionine (which can be derived from the diet) to yield selenocysteine, ammonia and 2-oxobutanoate. This chain is Cystathionine gamma-lyase (CTH), found in Sus scrofa (Pig).